The following is a 4568-amino-acid chain: Dynein beta chain, flagellar outer arm (4568 aa).

The segment at 1–1880 (MAEDEGMTAA…QVNICDAEIA (1880 aa)) is stem. Coiled coils occupy residues 277 to 293 (FQRL…EAND), 1158 to 1175 (EEAA…RKAL), 1372 to 1400 (KIDV…RNYD), 1614 to 1650 (EACT…RVAF), and 1778 to 1825 (QEIN…RKKL). The disordered stretch occupies residues 1144–1166 (GVEEEPEYHPDQDPEEAAAKKAA). Residues 1150 to 1166 (EYHPDQDPEEAAAKKAA) are compositionally biased toward basic and acidic residues. AAA stretches follow at residues 1881 to 2102 (YSYE…TLYV), 2164 to 2385 (EAAH…RNFK), 2493 to 2738 (QYIP…ITQG), and 2841 to 3090 (EYNE…FRRY). ATP-binding positions include 1919–1926 (GPAGTGKT), 2202–2209 (GAAGCGKT), and 2530–2537 (GNTGTGKS). Residues 2831 to 2848 (LRKTLEDKLREYNESNAV) are a coiled coil. 2879–2886 (GVGGSGKQ) provides a ligand contact to ATP. Coiled-coil stretches lie at residues 3106–3162 (KMLL…DELI), 3339–3425 (KRAA…RLES), and 3648–3728 (HERP…KARE). A stalk region spans residues 3106–3425 (KMLLQLKRDD…WGAEIKRLES (320 aa)). 2 AAA regions span residues 3481-3711 (LTDD…EIEE) and 3937-4172 (MGRF…TANN).

It belongs to the dynein heavy chain family. As to quaternary structure, consists of at least 3 heavy chains (alpha, beta and gamma), 2 intermediate chains and 8 light chains.

The protein resides in the cell projection. Its subcellular location is the cilium. It localises to the flagellum. The protein localises to the cytoplasm. It is found in the cytoskeleton. The protein resides in the flagellum axoneme. Functionally, force generating protein of eukaryotic cilia and flagella. Produces force towards the minus ends of microtubules. Dynein has ATPase activity; the force-producing power stroke is thought to occur on release of ADP. This is Dynein beta chain, flagellar outer arm (ODA4) from Chlamydomonas reinhardtii (Chlamydomonas smithii).